We begin with the raw amino-acid sequence, 417 residues long: Phosphoribosylamine--glycine ligase (417 aa).

The ATP-grasp domain maps to 107 to 313 (KQIMAKYEIP…FLEIIEATLE (207 aa)). 133 to 194 (LKETWYPVVI…EEMLYGKEAS (62 aa)) contributes to the ATP binding site. Glu283 and Asn285 together coordinate Mg(2+).

This sequence belongs to the GARS family. Requires Mg(2+) as cofactor. The cofactor is Mn(2+).

The catalysed reaction is 5-phospho-beta-D-ribosylamine + glycine + ATP = N(1)-(5-phospho-beta-D-ribosyl)glycinamide + ADP + phosphate + H(+). It functions in the pathway purine metabolism; IMP biosynthesis via de novo pathway; N(1)-(5-phospho-D-ribosyl)glycinamide from 5-phospho-alpha-D-ribose 1-diphosphate: step 2/2. In Caldanaerobacter subterraneus subsp. tengcongensis (strain DSM 15242 / JCM 11007 / NBRC 100824 / MB4) (Thermoanaerobacter tengcongensis), this protein is Phosphoribosylamine--glycine ligase.